We begin with the raw amino-acid sequence, 330 residues long: Protein LEG1 homolog (330 aa).

The signal sequence occupies residues 1 to 20 (MAFLPSWVCVLVGSFSASLA). Residues N24 and N69 are each glycosylated (N-linked (GlcNAc...) asparagine).

This sequence belongs to the LEG1 family. Detected in saliva and in hypomineralized dental enamel (at protein level).

The protein localises to the secreted. Its function is as follows. May be involved in early liver development. This Homo sapiens (Human) protein is Protein LEG1 homolog.